Reading from the N-terminus, the 343-residue chain is 3-dehydroquinate synthase (343 aa).

NAD(+) is bound by residues 86 to 90, 110 to 111, Lys-123, and Lys-132; these read GALLD and TT. Residues Glu-165, His-229, and His-243 each contribute to the Zn(2+) site.

Belongs to the sugar phosphate cyclases superfamily. Dehydroquinate synthase family. Requires Co(2+) as cofactor. Zn(2+) serves as cofactor. It depends on NAD(+) as a cofactor.

The protein localises to the cytoplasm. It carries out the reaction 7-phospho-2-dehydro-3-deoxy-D-arabino-heptonate = 3-dehydroquinate + phosphate. The protein operates within metabolic intermediate biosynthesis; chorismate biosynthesis; chorismate from D-erythrose 4-phosphate and phosphoenolpyruvate: step 2/7. Its function is as follows. Catalyzes the conversion of 3-deoxy-D-arabino-heptulosonate 7-phosphate (DAHP) to dehydroquinate (DHQ). This chain is 3-dehydroquinate synthase, found in Pyrobaculum islandicum (strain DSM 4184 / JCM 9189 / GEO3).